Reading from the N-terminus, the 164-residue chain is Lipoprotein signal peptidase (164 aa).

Helical transmembrane passes span 12–32 (WLWL…LILQ), 70–90 (WFFA…MYRS), and 102–122 (ALII…GFVV). Catalysis depends on residues aspartate 123 and aspartate 141. The helical transmembrane segment at 137-157 (FNLADTAICVGAALIVLEGFL) threads the bilayer.

This sequence belongs to the peptidase A8 family.

The protein resides in the cell inner membrane. It carries out the reaction Release of signal peptides from bacterial membrane prolipoproteins. Hydrolyzes -Xaa-Yaa-Zaa-|-(S,diacylglyceryl)Cys-, in which Xaa is hydrophobic (preferably Leu), and Yaa (Ala or Ser) and Zaa (Gly or Ala) have small, neutral side chains.. It participates in protein modification; lipoprotein biosynthesis (signal peptide cleavage). In terms of biological role, this protein specifically catalyzes the removal of signal peptides from prolipoproteins. The protein is Lipoprotein signal peptidase of Escherichia coli O9:H4 (strain HS).